Consider the following 159-residue polypeptide: Small ribosomal subunit protein uS9 (159 aa).

The protein belongs to the universal ribosomal protein uS9 family.

This is Small ribosomal subunit protein uS9 from Rickettsia massiliae (strain Mtu5).